We begin with the raw amino-acid sequence, 92 residues long: Bombyxin A-1 (92 aa).

An N-terminal signal peptide occupies residues 1–19 (MKILLAIALMLSTVMWVST). Position 20 is a pyrrolidone carboxylic acid (Gln-20). Intrachain disulfides connect Cys-29-Cys-79, Cys-41-Cys-92, and Cys-78-Cys-83. A propeptide spans 50 to 70 (SGAQFASYGSAWLMPYSEGRG) (c peptide like).

This sequence belongs to the insulin family. Heterodimer of a B chain and an A chain linked by two disulfide bonds.

Its subcellular location is the secreted. Functionally, brain peptide responsible for activation of prothoracic glands to produce ecdysone in insects. The chain is Bombyxin A-1 (BBXA1) from Bombyx mori (Silk moth).